Consider the following 82-residue polypeptide: Beta-defensin 113 (82 aa).

The signal sequence occupies residues methionine 1 to cysteine 16. 3 disulfides stabilise this stretch: cysteine 35–cysteine 61, cysteine 42–cysteine 56, and cysteine 46–cysteine 62.

It belongs to the beta-defensin family.

The protein localises to the secreted. Has antibacterial activity. This is Beta-defensin 113 (DEFB113) from Homo sapiens (Human).